Reading from the N-terminus, the 368-residue chain is Protein mab-21-like (368 aa).

Belongs to the mab-21 family.

The sequence is that of Protein mab-21-like from Drosophila pseudoobscura pseudoobscura (Fruit fly).